A 128-amino-acid chain; its full sequence is Transcription antitermination protein NusB (128 aa).

The protein belongs to the NusB family.

Its function is as follows. Involved in transcription antitermination. Required for transcription of ribosomal RNA (rRNA) genes. Binds specifically to the boxA antiterminator sequence of the ribosomal RNA (rrn) operons. The chain is Transcription antitermination protein NusB from Listeria monocytogenes serotype 4a (strain HCC23).